The sequence spans 390 residues: MDIDEESYLNAGPSAPSKIPQGGEGDRLQGMSKKAMKRAAKQARLEEIKPLKRAAERERRRQRTAQLAEGYAAGTLSEADKELVERRRRVEKERKEAQRRIESGDQANDWLGGVVIDLGFDDLMTDQEIASMAQQLGYLYSSNRTAEKPVRTVIHTTFSPAASPRLWQRMENFNWHKWSRCHWWEQGLETLKSQLDPSTSILSVQSVVSKETQDKAGIDTKSLLSRLTGPQVPVDLQAGKHKLVYLSADAEDELLSLSEDEIYIIGGIVDRNRHKNLCQGKAEQLGIRTARLPIGTFLEMLPTRKVLTVNQVFDILVKYLHLGDWAAAFEAVIPIRKYAPGRKTKRAKTETKRNEKEEEEVECTSAEGEEDIGVIEESAEVDPEDVFSNQ.

Residues 1–72 form a disordered region; the sequence is MDIDEESYLN…RTAQLAEGYA (72 aa). The segment covering 43 to 59 has biased composition (basic and acidic residues); it reads ARLEEIKPLKRAAERER. In terms of domain architecture, SAM-dependent MTase TRM10-type spans 92–340; that stretch reads KERKEAQRRI…AVIPIRKYAP (249 aa). S-adenosyl-L-methionine-binding positions include 246–247, glycine 266, 270–274, cysteine 278, leucine 292, and 305–307; these read LS, DRNRH, and KVL. The active-site Proton acceptor is the aspartate 270. The segment at 343-390 is disordered; sequence KTKRAKTETKRNEKEEEEVECTSAEGEEDIGVIEESAEVDPEDVFSNQ. Over residues 347 to 356 the composition is skewed to basic and acidic residues; the sequence is AKTETKRNEK. Residues 357–390 are compositionally biased toward acidic residues; that stretch reads EEEEVECTSAEGEEDIGVIEESAEVDPEDVFSNQ.

Belongs to the class IV-like SAM-binding methyltransferase superfamily. TRM10 family. In terms of assembly, monomer.

The protein localises to the cytoplasm. It is found in the nucleus. The catalysed reaction is guanosine(9) in tRNA + S-adenosyl-L-methionine = N(1)-methylguanosine(9) in tRNA + S-adenosyl-L-homocysteine + H(+). Its function is as follows. S-adenosyl-L-methionine-dependent guanine N(1)-methyltransferase that catalyzes the formation of N(1)-methylguanine at position 9 (m1G9) in cytoplasmic tRNA. This is tRNA (guanine(9)-N1)-methyltransferase from Cryptococcus neoformans var. neoformans serotype D (strain JEC21 / ATCC MYA-565) (Filobasidiella neoformans).